Consider the following 395-residue polypeptide: Succinyl-diaminopimelate desuccinylase (395 aa).

Residue His-74 participates in Zn(2+) binding. Asp-76 is a catalytic residue. Asp-107 is a binding site for Zn(2+). The active-site Proton acceptor is the Glu-141. Zn(2+)-binding residues include Glu-142, Glu-170, and His-368.

This sequence belongs to the peptidase M20A family. DapE subfamily. Homodimer. It depends on Zn(2+) as a cofactor. Co(2+) serves as cofactor.

It catalyses the reaction N-succinyl-(2S,6S)-2,6-diaminopimelate + H2O = (2S,6S)-2,6-diaminopimelate + succinate. It participates in amino-acid biosynthesis; L-lysine biosynthesis via DAP pathway; LL-2,6-diaminopimelate from (S)-tetrahydrodipicolinate (succinylase route): step 3/3. In terms of biological role, catalyzes the hydrolysis of N-succinyl-L,L-diaminopimelic acid (SDAP), forming succinate and LL-2,6-diaminopimelate (DAP), an intermediate involved in the bacterial biosynthesis of lysine and meso-diaminopimelic acid, an essential component of bacterial cell walls. The protein is Succinyl-diaminopimelate desuccinylase of Brucella melitensis biotype 1 (strain ATCC 23456 / CCUG 17765 / NCTC 10094 / 16M).